Consider the following 452-residue polypeptide: Golgi reassembly-stacking protein 2 (452 aa).

The N-myristoyl glycine moiety is linked to residue G2. 2 PDZ GRASP-type domains span residues 15-105 (EGYH…FCSF) and 111-199 (NVWH…YGYL). The interval 15-215 (EGYHVLRVQE…PFEEGKKISL (201 aa)) is GRASP. 2 positions are modified to dimethylated arginine: R30 and R47. The interval 194-199 (IGYGYL) is important for membrane binding. A Phosphoserine modification is found at S214. Phosphothreonine is present on residues T222 and T225. Residues 372 to 424 (PESSSAASSGELLSSLPPTSNAPSDPATTTAKADAASSLTVDVTPPTAKAPTT) show a composition bias toward low complexity. The disordered stretch occupies residues 372-452 (PESSSAASSG…AVDANASESP (81 aa)). At S409 the chain carries Phosphoserine. A phosphothreonine mark is found at T415 and T433. 4 positions are modified to phosphoserine: S436, S441, S449, and S451.

It belongs to the GORASP family. In terms of assembly, homodimer. Homooligomer. ER stress induces phosphorylation-dependent monomerization. Interacts with BLZF1/Golgin 45. Identified in a complex with RAB2 and GORASP2. Interacts with JAM2 and JAM3. Interacts with members of the p24 cargo receptors. Interacts with CNIH1 and the cytoplasmic domain of transmembrane TGFA, prior its transit in the trans-Golgi. Interacts with KCTD5. Interacts with TMED2 and TMED3. Interacts with SEC16A in response to ER stress. Interacts (via PDZ GRASP-type 1 domain) with core-glycosylated CFTR in response to ER stress. Myristoylated. Myristoylation is essential for the Golgi targeting. In terms of processing, palmitoylated. Post-translationally, phosphorylated in mitotic cells. ER stress-induced phosphorylation at Ser-441 induces monomerization and subsequent relocalization from Golgi to ER which is essential for mediating unconventional (ER/Golgi-independent) trafficking of CFTR to the cell membrane.

It is found in the golgi apparatus membrane. The protein resides in the endoplasmic reticulum membrane. The protein localises to the golgi apparatus. Key structural protein of the Golgi apparatus. The membrane cisternae of the Golgi apparatus adhere to each other to form stacks, which are aligned side by side to form the Golgi ribbon. Acting in concert with GORASP1/GRASP65, is required for the formation and maintenance of the Golgi ribbon, and may be dispensable for the formation of stacks. However, other studies suggest that GORASP2 plays a role in the assembly and membrane stacking of the Golgi cisternae, and in the process by which Golgi stacks reform after breakdown during mitosis and meiosis. May regulate the intracellular transport and presentation of a defined set of transmembrane proteins, such as transmembrane TGFA. Required for normal acrosome formation during spermiogenesis and normal male fertility, probably by promoting colocalization of JAM2 and JAM3 at contact sites between germ cells and Sertoli cells. Mediates ER stress-induced unconventional (ER/Golgi-independent) trafficking of core-glycosylated CFTR to cell membrane. The protein is Golgi reassembly-stacking protein 2 (GORASP2) of Homo sapiens (Human).